Reading from the N-terminus, the 170-residue chain is NADH-quinone oxidoreductase subunit B (170 aa).

4 residues coordinate [4Fe-4S] cluster: cysteine 46, cysteine 47, cysteine 111, and cysteine 141.

This sequence belongs to the complex I 20 kDa subunit family. NDH-1 is composed of 14 different subunits. Subunits NuoB, C, D, E, F, and G constitute the peripheral sector of the complex. Requires [4Fe-4S] cluster as cofactor.

The protein resides in the cell membrane. It catalyses the reaction a quinone + NADH + 5 H(+)(in) = a quinol + NAD(+) + 4 H(+)(out). Functionally, NDH-1 shuttles electrons from NADH, via FMN and iron-sulfur (Fe-S) centers, to quinones in the respiratory chain. The immediate electron acceptor for the enzyme in this species is believed to be a menaquinone. Couples the redox reaction to proton translocation (for every two electrons transferred, four hydrogen ions are translocated across the cytoplasmic membrane), and thus conserves the redox energy in a proton gradient. This Geobacillus sp. (strain WCH70) protein is NADH-quinone oxidoreductase subunit B.